Consider the following 179-residue polypeptide: MMMSDNAKGRAAHSWKKRGSISSLSNHEFWRKEIHGRIKDSMSTVSYMEEPSQRDDISRLTVQMENTYQLGPPKHFPVVTVNHILKDVVTSYLQVEEYEPELCRQMTKTISEVIKAQVKDLMIPRYKLIVIVHIGQLNRQSILIGSRCLWDPKSDTFSSYVFRNSSLFALANVYAVYLE.

Belongs to the dynein light chain Tctex-type family. In terms of assembly, interacts with ZMYND10.

This chain is Dynein light chain Tctex-type 5 (DYNLT5), found in Homo sapiens (Human).